Reading from the N-terminus, the 431-residue chain is Serine hydroxymethyltransferase (431 aa).

(6S)-5,6,7,8-tetrahydrofolate-binding positions include Leu121 and 125–127 (GHL). N6-(pyridoxal phosphate)lysine is present on Lys230. A (6S)-5,6,7,8-tetrahydrofolate-binding site is contributed by 369-371 (SPF).

This sequence belongs to the SHMT family. As to quaternary structure, homodimer. The cofactor is pyridoxal 5'-phosphate.

The protein localises to the cytoplasm. The enzyme catalyses (6R)-5,10-methylene-5,6,7,8-tetrahydrofolate + glycine + H2O = (6S)-5,6,7,8-tetrahydrofolate + L-serine. It participates in one-carbon metabolism; tetrahydrofolate interconversion. Its pathway is amino-acid biosynthesis; glycine biosynthesis; glycine from L-serine: step 1/1. Functionally, catalyzes the reversible interconversion of serine and glycine with tetrahydrofolate (THF) serving as the one-carbon carrier. This reaction serves as the major source of one-carbon groups required for the biosynthesis of purines, thymidylate, methionine, and other important biomolecules. Also exhibits THF-independent aldolase activity toward beta-hydroxyamino acids, producing glycine and aldehydes, via a retro-aldol mechanism. In Cytophaga hutchinsonii (strain ATCC 33406 / DSM 1761 / CIP 103989 / NBRC 15051 / NCIMB 9469 / D465), this protein is Serine hydroxymethyltransferase.